The following is a 250-amino-acid chain: Uracil-DNA glycosylase (250 aa).

The active-site Proton acceptor is D91.

The protein belongs to the uracil-DNA glycosylase (UDG) superfamily. UNG family.

It localises to the host nucleus. It carries out the reaction Hydrolyzes single-stranded DNA or mismatched double-stranded DNA and polynucleotides, releasing free uracil.. Its function is as follows. Excises uracil residues from the DNA which can arise as a result of misincorporation of dUMP residues by DNA polymerase or due to deamination of cytosine. Functionally, excises uracil residues from the DNA which can arise as a result of misincorporation of dUMP residues by DNA polymerase or deamination of cytosines. Therefore may reduce deleterious uracil incorporation into the viral genome, particularly in terminally differentiated cells which lack DNA repair enzymes. The sequence is that of Uracil-DNA glycosylase (UL114) from Homo sapiens (Human).